The chain runs to 314 residues: Ribosomal RNA small subunit methyltransferase H (314 aa).

Residues 33 to 35 (GGH), Asp-52, Phe-84, Asp-105, and Gln-112 each bind S-adenosyl-L-methionine.

It belongs to the methyltransferase superfamily. RsmH family.

Its subcellular location is the cytoplasm. The enzyme catalyses cytidine(1402) in 16S rRNA + S-adenosyl-L-methionine = N(4)-methylcytidine(1402) in 16S rRNA + S-adenosyl-L-homocysteine + H(+). Specifically methylates the N4 position of cytidine in position 1402 (C1402) of 16S rRNA. The polypeptide is Ribosomal RNA small subunit methyltransferase H (Lactobacillus delbrueckii subsp. bulgaricus (strain ATCC 11842 / DSM 20081 / BCRC 10696 / JCM 1002 / NBRC 13953 / NCIMB 11778 / NCTC 12712 / WDCM 00102 / Lb 14)).